A 236-amino-acid polypeptide reads, in one-letter code: Leucyl/phenylalanyl-tRNA--protein transferase (236 aa).

Belongs to the L/F-transferase family.

It is found in the cytoplasm. The enzyme catalyses N-terminal L-lysyl-[protein] + L-leucyl-tRNA(Leu) = N-terminal L-leucyl-L-lysyl-[protein] + tRNA(Leu) + H(+). It catalyses the reaction N-terminal L-arginyl-[protein] + L-leucyl-tRNA(Leu) = N-terminal L-leucyl-L-arginyl-[protein] + tRNA(Leu) + H(+). It carries out the reaction L-phenylalanyl-tRNA(Phe) + an N-terminal L-alpha-aminoacyl-[protein] = an N-terminal L-phenylalanyl-L-alpha-aminoacyl-[protein] + tRNA(Phe). In terms of biological role, functions in the N-end rule pathway of protein degradation where it conjugates Leu, Phe and, less efficiently, Met from aminoacyl-tRNAs to the N-termini of proteins containing an N-terminal arginine or lysine. The polypeptide is Leucyl/phenylalanyl-tRNA--protein transferase (Nitrosomonas europaea (strain ATCC 19718 / CIP 103999 / KCTC 2705 / NBRC 14298)).